We begin with the raw amino-acid sequence, 199 residues long: Recombination protein RecR (199 aa).

The C4-type zinc finger occupies 58–73 (CKICFNITDKEVCDIC). The region spanning 81–176 (STICVVSHPM…KVTRIAHGIP (96 aa)) is the Toprim domain.

Belongs to the RecR family.

In terms of biological role, may play a role in DNA repair. It seems to be involved in an RecBC-independent recombinational process of DNA repair. It may act with RecF and RecO. In Caldanaerobacter subterraneus subsp. tengcongensis (strain DSM 15242 / JCM 11007 / NBRC 100824 / MB4) (Thermoanaerobacter tengcongensis), this protein is Recombination protein RecR.